A 179-amino-acid chain; its full sequence is Adenine phosphoribosyltransferase (179 aa).

The protein belongs to the purine/pyrimidine phosphoribosyltransferase family. Homodimer.

The protein resides in the cytoplasm. It catalyses the reaction AMP + diphosphate = 5-phospho-alpha-D-ribose 1-diphosphate + adenine. It participates in purine metabolism; AMP biosynthesis via salvage pathway; AMP from adenine: step 1/1. In terms of biological role, catalyzes a salvage reaction resulting in the formation of AMP, that is energically less costly than de novo synthesis. This chain is Adenine phosphoribosyltransferase, found in Gluconobacter oxydans (strain 621H) (Gluconobacter suboxydans).